Here is a 524-residue protein sequence, read N- to C-terminus: Acetyl-CoA hydrolase (524 aa).

275–279 serves as a coordination point for CoA; that stretch reads GIGNI. The 5-glutamyl coenzyme A thioester intermediate role is filled by Glu-300. The CoA site is built by Asn-390 and Gly-394.

Belongs to the acetyl-CoA hydrolase/transferase family.

The protein localises to the cytoplasm. The enzyme catalyses acetyl-CoA + H2O = acetate + CoA + H(+). Presumably involved in regulating the intracellular acetyl-CoA pool for fatty acid and cholesterol synthesis and fatty acid oxidation. The chain is Acetyl-CoA hydrolase (ACH1) from Candida albicans (strain SC5314 / ATCC MYA-2876) (Yeast).